The sequence spans 272 residues: GPN-loop GTPase 3 (272 aa).

Position 13–18 (13–18) interacts with GTP; sequence GAGKST. Residues 70–72 carry the Gly-Pro-Asn (GPN)-loop; involved in dimer interface motif; sequence GPN. A GTP-binding site is contributed by 173–176; that stretch reads SKLD.

It belongs to the GPN-loop GTPase family. Heterodimers with NPA3/GPN1 or GPN2. Binds to RNA polymerase II (RNAPII).

Its function is as follows. Small GTPase required for proper nuclear localization of RNA polymerase II and III (RNAPII and RNAPIII). May act at an RNAP assembly step prior to nuclear import. Promotes sister chromatid separation during anaphase. In Saccharomyces cerevisiae (strain ATCC 204508 / S288c) (Baker's yeast), this protein is GPN-loop GTPase 3.